Here is a 404-residue protein sequence, read N- to C-terminus: Beta-ketoacyl-[acyl-carrier-protein] synthase III, chloroplastic (404 aa).

Residues 1 to 43 (MANASGFFTHPSIPNLRSRIHVPVRVSGSGFCVSNRFSKRVLC) constitute a chloroplast transit peptide. Active-site residues include C179, H330, and N360.

This sequence belongs to the thiolase-like superfamily. FabH family.

The protein resides in the plastid. The protein localises to the chloroplast. The catalysed reaction is malonyl-[ACP] + acetyl-CoA + H(+) = 3-oxobutanoyl-[ACP] + CO2 + CoA. It functions in the pathway lipid metabolism; fatty acid biosynthesis. In terms of biological role, catalyzes the condensation reaction of fatty acid synthesis by the addition to an acyl acceptor of two carbons from malonyl-ACP. KAS III catalyzes the first condensation reaction which initiates fatty acid synthesis and may therefore play a role in governing the total rate of fatty acid production. Possesses both acetoacetyl-ACP synthase and acetyl transacylase activities. This chain is Beta-ketoacyl-[acyl-carrier-protein] synthase III, chloroplastic, found in Arabidopsis thaliana (Mouse-ear cress).